A 309-amino-acid polypeptide reads, in one-letter code: 4-hydroxy-3-methylbut-2-enyl diphosphate reductase (309 aa).

Cys-12 provides a ligand contact to [4Fe-4S] cluster. (2E)-4-hydroxy-3-methylbut-2-enyl diphosphate is bound by residues His-41 and His-74. Dimethylallyl diphosphate is bound by residues His-41 and His-74. His-41 and His-74 together coordinate isopentenyl diphosphate. Cys-96 provides a ligand contact to [4Fe-4S] cluster. His-124 contributes to the (2E)-4-hydroxy-3-methylbut-2-enyl diphosphate binding site. His-124 provides a ligand contact to dimethylallyl diphosphate. Residue His-124 participates in isopentenyl diphosphate binding. The Proton donor role is filled by Glu-126. Thr-167 is a (2E)-4-hydroxy-3-methylbut-2-enyl diphosphate binding site. Cys-197 provides a ligand contact to [4Fe-4S] cluster. Residues Ser-225, Ser-226, Asn-227, and Ser-269 each contribute to the (2E)-4-hydroxy-3-methylbut-2-enyl diphosphate site. Dimethylallyl diphosphate is bound by residues Ser-225, Ser-226, Asn-227, and Ser-269. Residues Ser-225, Ser-226, Asn-227, and Ser-269 each coordinate isopentenyl diphosphate.

Belongs to the IspH family. [4Fe-4S] cluster serves as cofactor.

It catalyses the reaction isopentenyl diphosphate + 2 oxidized [2Fe-2S]-[ferredoxin] + H2O = (2E)-4-hydroxy-3-methylbut-2-enyl diphosphate + 2 reduced [2Fe-2S]-[ferredoxin] + 2 H(+). The enzyme catalyses dimethylallyl diphosphate + 2 oxidized [2Fe-2S]-[ferredoxin] + H2O = (2E)-4-hydroxy-3-methylbut-2-enyl diphosphate + 2 reduced [2Fe-2S]-[ferredoxin] + 2 H(+). Its pathway is isoprenoid biosynthesis; dimethylallyl diphosphate biosynthesis; dimethylallyl diphosphate from (2E)-4-hydroxy-3-methylbutenyl diphosphate: step 1/1. It functions in the pathway isoprenoid biosynthesis; isopentenyl diphosphate biosynthesis via DXP pathway; isopentenyl diphosphate from 1-deoxy-D-xylulose 5-phosphate: step 6/6. Catalyzes the conversion of 1-hydroxy-2-methyl-2-(E)-butenyl 4-diphosphate (HMBPP) into a mixture of isopentenyl diphosphate (IPP) and dimethylallyl diphosphate (DMAPP). Acts in the terminal step of the DOXP/MEP pathway for isoprenoid precursor biosynthesis. This chain is 4-hydroxy-3-methylbut-2-enyl diphosphate reductase, found in Shewanella pealeana (strain ATCC 700345 / ANG-SQ1).